The following is a 118-amino-acid chain: Large ribosomal subunit protein bL20 (118 aa).

It belongs to the bacterial ribosomal protein bL20 family.

In terms of biological role, binds directly to 23S ribosomal RNA and is necessary for the in vitro assembly process of the 50S ribosomal subunit. It is not involved in the protein synthesizing functions of that subunit. The sequence is that of Large ribosomal subunit protein bL20 from Clostridioides difficile (strain 630) (Peptoclostridium difficile).